We begin with the raw amino-acid sequence, 227 residues long: MTENLQDMFESSYRGEAPEQLAARPPWSIGQPQPEILKLIEQGKVHGDVLDAGCGEAATALYLAERGHTAVGLDAAPTAIQLAKGYAAERGLTNVTFDVADISNFTGYDGRFGTIIDSTLFHSMPVELREGYQQSIVRAAAPGANYIVLVFDKAAFPPDIDGPHPVSEPELREIVSKYWTVDDISPARLYANGDGFQDGGAQRFAEFREESNGWVSMAGWLLQAHRD.

This sequence belongs to the methyltransferase superfamily. Monomer.

It is found in the cytoplasm. It catalyses the reaction 2-heptyl-1-hydroxy-4(1H)-quinolinone + S-adenosyl-L-methionine = 2-heptyl-1-methoxy-4(1H)-quinolinone + S-adenosyl-L-homocysteine + H(+). It carries out the reaction 3-bromo-2-heptyl-1-hydroxy-4(1H)-quinolinone + S-adenosyl-L-methionine = 3-bromo-2-heptyl-1-methoxy-4(1H)-quinolinone + S-adenosyl-L-homocysteine + H(+). Involved in cellular response to chemical stress and may contribute to resistance toward antimicrobial natural compounds as well as drugs. Catalyzes the methylation and detoxification of the P.aeruginosa toxin 2-heptyl-1-hydroxy-4(1H)-quinolinone (HQNO) to 2-heptyl-1-methoxy-4(1H)-quinolinone (HMOQ). Can also methylate 3-bromo-2-heptyl-1-hydroxy-4(1H)-quinolinone, and shows much lower activity with 1-hydroxyquinolin-4(1H)-one, quercetin, 4-hydroxyquinolin-2(1H)-one (DHQ) and 4-hydroxyisoquinolin-1(2H)-one. This Mycobacteroides abscessus (strain ATCC 19977 / DSM 44196 / CCUG 20993 / CIP 104536 / JCM 13569 / NCTC 13031 / TMC 1543 / L948) (Mycobacterium abscessus) protein is 2-heptyl-1-hydroxyquinolin-4(1H)-one methyltransferase.